A 192-amino-acid polypeptide reads, in one-letter code: Ion-translocating oxidoreductase complex subunit B (192 aa).

Residues 1-26 are hydrophobic; it reads MNAIWIAVAAVSLLGLAFGAILGYAS. One can recognise a 4Fe-4S domain in the interval 32-91; the sequence is EDDPVVEKIDEILPQSQCGQCGYPGCRPYAEAISCNGEKINRCAPGGEAVMLKIAELLNV. [4Fe-4S] cluster is bound by residues cysteine 49, cysteine 52, cysteine 57, cysteine 74, cysteine 117, cysteine 120, cysteine 123, cysteine 127, cysteine 147, cysteine 150, cysteine 153, and cysteine 157. 4Fe-4S ferredoxin-type domains follow at residues 108-137 and 138-167; these read MVAV…GATR and AMHT…LQPV.

The protein belongs to the 4Fe4S bacterial-type ferredoxin family. RnfB subfamily. As to quaternary structure, the complex is composed of six subunits: RsxA, RsxB, RsxC, RsxD, RsxE and RsxG. Requires [4Fe-4S] cluster as cofactor.

It is found in the cell inner membrane. Its function is as follows. Part of a membrane-bound complex that couples electron transfer with translocation of ions across the membrane. Required to maintain the reduced state of SoxR. The chain is Ion-translocating oxidoreductase complex subunit B from Escherichia coli O139:H28 (strain E24377A / ETEC).